Reading from the N-terminus, the 525-residue chain is Neutrophil cytosol factor 2 (525 aa).

TPR repeat units follow at residues 37–70 (SRIC…DKHS), 71–104 (AVAY…LRGN), and 121–154 (CEVL…KSEP). Phosphothreonine is present on Thr-233. The 60-residue stretch at 240–299 (LEGEAHRVLFGFVPETPEELQVMPGNIVFVLKKGSDNWATVMFNGQKGLVPCNYLEPVEL) folds into the SH3 1 domain. Residues 304-343 (QSQPQEDTSPESDIPPPPNSSPPGRLQLSPGHKQKEPKEL) form a disordered region. Phosphoserine occurs at positions 324 and 398. A PB1 domain is found at 350–428 (PYMLKVHYKY…YCLTLWCEHT (79 aa)). Residues 437-457 (EPIQRENSDASKQTTEPQPKE) form a disordered region. Residues 456-515 (KEGTQVVAIFSYEAAQPEDLEFVEGDVILVLSHVNEEWLEGECKGKVGIFPKAFVEGCAA) enclose the SH3 2 domain.

The protein belongs to the NCF2/NOXA1 family. As to quaternary structure, component of the phagocyte NADPH oxidase complex composed of an obligatory core heterodimer formed by the membrane proteins CYBA and CYBB and the cytosolic regulatory subunits NCF1/p47-phox, NCF2/p67-phox, NCF4/p40-phox and the small GTPase RAC1 or RAC2. Part of a cytosolic complex composed at least by NCF1, NCF2 and NCF4. Interacts with NCF4. Interacts (via the C-terminal SH3 domain) with NCF1 (via C-terminus). Interacts with SYTL1 and RAC1. May interact with NOXO1. Interacts with S100A8 and calprotectin (S100A8/9). Interacts with GBP7 (via GB1/RHD3-type G domain). Interacts with CYBB; the interaction is enhanced in the presence of GBP7.

The protein localises to the cytoplasm. NCF2, NCF1, and a membrane bound cytochrome b558 are required for activation of the latent NADPH oxidase (necessary for superoxide production). Functionally, subunit of the phagocyte NADPH oxidase complex that mediates the transfer of electrons from cytosolic NADPH to O2 to produce the superoxide anion (O2(-)). In the activated complex, electrons are first transferred from NADPH to flavin adenine dinucleotide (FAD) and subsequently transferred via two heme molecules to molecular oxygen, producing superoxide through an outer-sphere reaction. Activation of the NADPH oxidase complex is initiated by the assembly of cytosolic subunits of the NADPH oxidase complex with the core NADPH oxidase complex to form a complex at the plasma membrane or phagosomal membrane. This activation process is initiated by phosphorylation dependent binding of the cytosolic NCF1/p47-phox subunit to the C-terminus of CYBA/p22-phox. The sequence is that of Neutrophil cytosol factor 2 from Mus musculus (Mouse).